We begin with the raw amino-acid sequence, 977 residues long: DNA-directed RNA polymerase 3B, chloroplastic (977 aa).

Residues 1–71 (MASTASYSPS…NNIQSQTTVC (71 aa)) constitute a chloroplast transit peptide. Residues Asp-678, Lys-753, and Asp-910 contribute to the active site.

It belongs to the phage and mitochondrial RNA polymerase family.

Its subcellular location is the plastid. The protein localises to the chloroplast. It catalyses the reaction RNA(n) + a ribonucleoside 5'-triphosphate = RNA(n+1) + diphosphate. Its function is as follows. DNA-dependent RNA polymerase catalyzes the transcription of DNA into RNA using the four ribonucleoside triphosphates as substrates. The protein is DNA-directed RNA polymerase 3B, chloroplastic (RPOT3-TOM) of Nicotiana tabacum (Common tobacco).